A 398-amino-acid chain; its full sequence is FK506-binding protein 4 (398 aa).

Disordered regions lie at residues 66–120, 164–232, and 245–288; these read EVDE…DEYE, VKHP…QLAK, and DLIA…KKNK. Residues 170–228 are compositionally biased toward acidic residues; that stretch reads EPLEDLYSDEDSEEYSDDELDQEIEEDDELDHDEASSEESDEDQEFYDAISEGDEDIDE. A compositionally biased stretch (basic and acidic residues) spans 264–287; it reads PETKKSKKTKDEKNTKATENEKKN. Residues 312–398 enclose the PPIase FKBP-type domain; it reads GSKVGMRYIG…TFDVKLVSLK (87 aa).

The protein belongs to the FKBP-type PPIase family. FKBP3/4 subfamily. In terms of assembly, binds to histones H3 and H4.

It localises to the nucleus. The enzyme catalyses [protein]-peptidylproline (omega=180) = [protein]-peptidylproline (omega=0). Inhibited by both FK506 and rapamycin. In terms of biological role, PPIase that acts as a histone chaperone. Histone proline isomerase that increases the rate of cis-trans isomerization at prolines on the histone H3 N-terminal tail. Proline isomerization influences H3 methylation thereby regulating gene expression. This chain is FK506-binding protein 4 (FPR4), found in Candida glabrata (strain ATCC 2001 / BCRC 20586 / JCM 3761 / NBRC 0622 / NRRL Y-65 / CBS 138) (Yeast).